Consider the following 456-residue polypeptide: Histidine--tRNA ligase (456 aa).

A compositionally biased stretch (polar residues) spans 1 to 11 (MTQNENPSAQS). The segment at 1-22 (MTQNENPSAQSGAKPEDKARPA) is disordered.

It belongs to the class-II aminoacyl-tRNA synthetase family. Homodimer.

The protein localises to the cytoplasm. It carries out the reaction tRNA(His) + L-histidine + ATP = L-histidyl-tRNA(His) + AMP + diphosphate + H(+). The chain is Histidine--tRNA ligase from Cupriavidus pinatubonensis (strain JMP 134 / LMG 1197) (Cupriavidus necator (strain JMP 134)).